The chain runs to 500 residues: Cysteine--tRNA ligase (500 aa).

C29 contributes to the Zn(2+) binding site. Residues 31-41 carry the 'HIGH' region motif; it reads VTVYDLCHLGH. Zn(2+) is bound by residues C213, H238, and E242. The 'KMSKS' region signature appears at 270-274; it reads KMSKS. Residue K273 participates in ATP binding.

The protein belongs to the class-I aminoacyl-tRNA synthetase family. In terms of assembly, monomer. Zn(2+) serves as cofactor.

It localises to the cytoplasm. The enzyme catalyses tRNA(Cys) + L-cysteine + ATP = L-cysteinyl-tRNA(Cys) + AMP + diphosphate. The chain is Cysteine--tRNA ligase from Prochlorococcus marinus (strain NATL1A).